A 107-amino-acid chain; its full sequence is Snaclec VP12 subunit A (107 aa).

Cystine bridges form between cysteine 4–cysteine 15 and cysteine 32–cysteine 107. The C-type lectin domain occupies 11–107 (YEGNCYKAFD…ECGLAYPFIC (97 aa)).

Belongs to the snaclec family. Heterodimer of subunits alpha and beta; disulfide-linked. As to expression, expressed by the venom gland.

Its subcellular location is the secreted. Inhibits integrin alpha-2/beta-1- (ITGA2/ITGB1) dependent melanoma metastasis. The sequence is that of Snaclec VP12 subunit A from Daboia palaestinae (Palestine viper).